The sequence spans 110 residues: Large ribosomal subunit protein uL22 (110 aa).

Belongs to the universal ribosomal protein uL22 family. Part of the 50S ribosomal subunit.

In terms of biological role, this protein binds specifically to 23S rRNA; its binding is stimulated by other ribosomal proteins, e.g. L4, L17, and L20. It is important during the early stages of 50S assembly. It makes multiple contacts with different domains of the 23S rRNA in the assembled 50S subunit and ribosome. Its function is as follows. The globular domain of the protein is located near the polypeptide exit tunnel on the outside of the subunit, while an extended beta-hairpin is found that lines the wall of the exit tunnel in the center of the 70S ribosome. The protein is Large ribosomal subunit protein uL22 of Citrobacter koseri (strain ATCC BAA-895 / CDC 4225-83 / SGSC4696).